The chain runs to 843 residues: Leucine--tRNA ligase (843 aa).

The short motif at 61 to 71 (PYPSGDLHMGH) is the 'HIGH' region element. The short motif at 606–610 (AMSKS) is the 'KMSKS' region element. Lys-609 contacts ATP.

The protein belongs to the class-I aminoacyl-tRNA synthetase family.

It is found in the cytoplasm. The catalysed reaction is tRNA(Leu) + L-leucine + ATP = L-leucyl-tRNA(Leu) + AMP + diphosphate. The polypeptide is Leucine--tRNA ligase (Arthrobacter sp. (strain FB24)).